The primary structure comprises 117 residues: Large ribosomal subunit protein bL19 (117 aa).

This sequence belongs to the bacterial ribosomal protein bL19 family.

This protein is located at the 30S-50S ribosomal subunit interface and may play a role in the structure and function of the aminoacyl-tRNA binding site. The protein is Large ribosomal subunit protein bL19 of Shewanella denitrificans (strain OS217 / ATCC BAA-1090 / DSM 15013).